We begin with the raw amino-acid sequence, 107 residues long: Iron-sulfur cluster assembly protein CyaY (107 aa).

Belongs to the frataxin family.

Its function is as follows. Involved in iron-sulfur (Fe-S) cluster assembly. May act as a regulator of Fe-S biogenesis. The sequence is that of Iron-sulfur cluster assembly protein CyaY from Neisseria meningitidis serogroup B (strain ATCC BAA-335 / MC58).